The chain runs to 697 residues: Polyribonucleotide nucleotidyltransferase (697 aa).

Mg(2+) contacts are provided by aspartate 484 and aspartate 490. In terms of domain architecture, KH spans 551-610 (PRITTIWVKTDKIRDVIGSGGKNIRGITEATGVSIDIEDSGRINIASTSKEACDKAIKMI). In terms of domain architecture, S1 motif spans 620–688 (GKLYMGTVKK…KQGKIKLSRK (69 aa)).

Belongs to the polyribonucleotide nucleotidyltransferase family. The cofactor is Mg(2+).

It is found in the cytoplasm. It carries out the reaction RNA(n+1) + phosphate = RNA(n) + a ribonucleoside 5'-diphosphate. Its function is as follows. Involved in mRNA degradation. Catalyzes the phosphorolysis of single-stranded polyribonucleotides processively in the 3'- to 5'-direction. This Geobacter sulfurreducens (strain ATCC 51573 / DSM 12127 / PCA) protein is Polyribonucleotide nucleotidyltransferase.